We begin with the raw amino-acid sequence, 522 residues long: WEB family protein At2g38370 (522 aa).

The segment at methionine 1–phenylalanine 32 is disordered. Coiled-coil stretches lie at residues glutamate 77–glutamate 264 and alanine 299–asparagine 376. Disordered regions lie at residues serine 374–glutamate 397 and methionine 458–lysine 493. A compositionally biased stretch (basic and acidic residues) spans threonine 473–arginine 486.

Belongs to the WEB family.

This is WEB family protein At2g38370 from Arabidopsis thaliana (Mouse-ear cress).